We begin with the raw amino-acid sequence, 221 residues long: Ependymin-1 (221 aa).

Positions 1–21 are cleaved as a signal peptide; the sequence is MQAFAVAALSIWLCLGATTLA. N-linked (GlcNAc...) asparagine glycans are attached at residues Asn-33, Asn-73, and Asn-97.

Belongs to the ependymin family. Post-translationally, binds calcium through the terminal sialic acids. EPDs are synthesized in the meninx and secreted in the cerebrospinal fluid.

It is found in the secreted. In terms of biological role, may play a role in neural plasticity. May be involved during axon regeneration. This Oncorhynchus mykiss (Rainbow trout) protein is Ependymin-1 (epd1).